A 64-amino-acid polypeptide reads, in one-letter code: Large ribosomal subunit protein bL33 (64 aa).

This sequence belongs to the bacterial ribosomal protein bL33 family.

The chain is Large ribosomal subunit protein bL33 from Prochlorococcus marinus (strain MIT 9313).